Consider the following 84-residue polypeptide: Extender of the chronological lifespan protein 2 (84 aa).

Belongs to the ecl1 family.

Its subcellular location is the nucleus. Involved in chronological cell aging. The protein is Extender of the chronological lifespan protein 2 (ecl2) of Schizosaccharomyces pombe (strain 972 / ATCC 24843) (Fission yeast).